The primary structure comprises 292 residues: RNA 5'-monophosphate methyltransferase (292 aa).

Residues 1 to 21 (MAVPTELDGGSVKETAAEEES) form a disordered region. S-adenosyl-L-methionine is bound by residues Arg-46, Asn-76, Asp-110, 135-136 (DF), and Met-164. The Bin3-type SAM domain maps to 53-274 (ELLRQLFPES…KQTIETHPIP (222 aa)).

The protein belongs to the methyltransferase superfamily. Interacts with DICER1; the interaction may be mediated by RNA.

Its subcellular location is the cytoplasm. The catalysed reaction is a 5'-end 5'-phospho-ribonucleoside-RNA + S-adenosyl-L-methionine = a 5'-end (5'-methylphospho)-ribonucleoside-RNA + S-adenosyl-L-homocysteine. It carries out the reaction a 5'-end 5'-phospho-ribonucleoside-RNA + 2 S-adenosyl-L-methionine = a 5'-end (5'-bismethylphospho)-ribonucleoside-RNA + 2 S-adenosyl-L-homocysteine. Functionally, O-methyltransferase that specifically monomethylates 5'-monophosphate of cytoplasmic histidyl tRNA (tRNA(His)), acting as a capping enzyme by protecting tRNA(His) from cleavage by DICER1. Also able, with less efficiently, to methylate the 5' monophosphate of a subset of pre-miRNAs, acting as a negative regulator of miRNA processing. The 5' monophosphate of pre-miRNAs is recognized by DICER1 and is required for pre-miRNAs processing: methylation at this position reduces the processing of pre-miRNAs by DICER1. Was also reported to mediate dimethylation of pre-miR-145; however dimethylation cannot be reproduced by another group which observes a monomethylation of pre-miR-145. The chain is RNA 5'-monophosphate methyltransferase from Homo sapiens (Human).